The following is a 175-amino-acid chain: Methylmalonyl-CoA epimerase, mitochondrial (175 aa).

The transit peptide at 1-35 (MARVLKVAAASAAGLFPRLRTPVSTVRTSASLSSH) directs the protein to the mitochondrion. A VOC domain is found at 46 to 175 (RLNHVAVAVP…GGVLVELEQA (130 aa)). Co(2+) is bound at residue His49. N6-succinyllysine is present on Lys113. His121 lines the Co(2+) pocket. N6-acetyllysine; alternate is present on Lys149. At Lys149 the chain carries N6-succinyllysine; alternate. Residue Glu171 participates in Co(2+) binding.

Belongs to the methylmalonyl-CoA epimerase family.

Its subcellular location is the mitochondrion. The catalysed reaction is (R)-methylmalonyl-CoA = (S)-methylmalonyl-CoA. Its function is as follows. Methylmalonyl-CoA epimerase involved in propionyl-CoA metabolism. The sequence is that of Methylmalonyl-CoA epimerase, mitochondrial (MCEE) from Bos taurus (Bovine).